The chain runs to 416 residues: Interleukin-1 receptor type 2 (416 aa).

A signal peptide spans 1-13; it reads MFILLVLVTGVSA. The Extracellular portion of the chain corresponds to 14–355; that stretch reads FTTPAVVHTG…FQSLHTTVKE (342 aa). Ig-like C2-type domains follow at residues 29-136, 146-233, and 249-357; these read PVTS…LELK, PLVS…YNIT, and PVII…KEVS. 3 disulfides stabilise this stretch: Cys-42/Cys-128, Cys-64/Cys-120, and Cys-164/Cys-219. 4 N-linked (GlcNAc...) asparagine glycosylation sites follow: Asn-124, Asn-208, Asn-231, and Asn-289. An intrachain disulfide couples Cys-270 to Cys-338. A helical transmembrane segment spans residues 356-381; the sequence is VSSTFSWGIALAPLSLIILVVGAIWI. The Cytoplasmic segment spans residues 382-416; the sequence is RRRCKRQAGKTYGLTKLPTDNQDFPSSPNQIKEMK. The disordered stretch occupies residues 396 to 416; that stretch reads TKLPTDNQDFPSSPNQIKEMK. Positions 399–416 are enriched in polar residues; sequence PTDNQDFPSSPNQIKEMK.

The protein belongs to the interleukin-1 receptor family. Associates with IL1RAP to form a non-signaling interleukin-1 receptor complex. Post-translationally, a soluble form (sIL1R2) can also be produced by proteolytic cleavage at the cell surface (shedding) involving a metalloproteinase.

The protein localises to the membrane. The protein resides in the cell membrane. It localises to the secreted. Functionally, non-signaling receptor for IL1A, IL1B and IL1RN. Reduces IL1B activities. Serves as a decoy receptor by competitive binding to IL1B and preventing its binding to IL1R1. Also modulates cellular response through non-signaling association with IL1RAP after binding to IL1B. IL1R2 (membrane and secreted forms) preferentially binds IL1B and poorly IL1A and IL1RN. The secreted IL1R2 recruits secreted IL1RAP with high affinity; this complex formation may be the dominant mechanism for neutralization of IL1B by secreted/soluble receptors. The polypeptide is Interleukin-1 receptor type 2 (Il1r2) (Rattus norvegicus (Rat)).